Reading from the N-terminus, the 562-residue chain is Dihydroxy-acid dehydratase 2 (562 aa).

A [2Fe-2S] cluster-binding site is contributed by Cys-50. Asp-82 contacts Mg(2+). Cys-123 serves as a coordination point for [2Fe-2S] cluster. Positions 124, 125, and 447 each coordinate Mg(2+). Lys-125 bears the N6-carboxylysine mark. The active-site Proton acceptor is Ser-473.

It belongs to the IlvD/Edd family. Homodimer. [2Fe-2S] cluster serves as cofactor. Mg(2+) is required as a cofactor.

The catalysed reaction is (2R)-2,3-dihydroxy-3-methylbutanoate = 3-methyl-2-oxobutanoate + H2O. The enzyme catalyses (2R,3R)-2,3-dihydroxy-3-methylpentanoate = (S)-3-methyl-2-oxopentanoate + H2O. It functions in the pathway amino-acid biosynthesis; L-isoleucine biosynthesis; L-isoleucine from 2-oxobutanoate: step 3/4. It participates in amino-acid biosynthesis; L-valine biosynthesis; L-valine from pyruvate: step 3/4. In terms of biological role, functions in the biosynthesis of branched-chain amino acids. Catalyzes the dehydration of (2R,3R)-2,3-dihydroxy-3-methylpentanoate (2,3-dihydroxy-3-methylvalerate) into 2-oxo-3-methylpentanoate (2-oxo-3-methylvalerate) and of (2R)-2,3-dihydroxy-3-methylbutanoate (2,3-dihydroxyisovalerate) into 2-oxo-3-methylbutanoate (2-oxoisovalerate), the penultimate precursor to L-isoleucine and L-valine, respectively. This is Dihydroxy-acid dehydratase 2 from Bordetella pertussis (strain Tohama I / ATCC BAA-589 / NCTC 13251).